A 177-amino-acid polypeptide reads, in one-letter code: ATP synthase subunit delta (177 aa).

The protein belongs to the ATPase delta chain family. In terms of assembly, F-type ATPases have 2 components, F(1) - the catalytic core - and F(0) - the membrane proton channel. F(1) has five subunits: alpha(3), beta(3), gamma(1), delta(1), epsilon(1). F(0) has three main subunits: a(1), b(2) and c(10-14). The alpha and beta chains form an alternating ring which encloses part of the gamma chain. F(1) is attached to F(0) by a central stalk formed by the gamma and epsilon chains, while a peripheral stalk is formed by the delta and b chains.

The protein localises to the cell inner membrane. F(1)F(0) ATP synthase produces ATP from ADP in the presence of a proton or sodium gradient. F-type ATPases consist of two structural domains, F(1) containing the extramembraneous catalytic core and F(0) containing the membrane proton channel, linked together by a central stalk and a peripheral stalk. During catalysis, ATP synthesis in the catalytic domain of F(1) is coupled via a rotary mechanism of the central stalk subunits to proton translocation. Functionally, this protein is part of the stalk that links CF(0) to CF(1). It either transmits conformational changes from CF(0) to CF(1) or is implicated in proton conduction. The polypeptide is ATP synthase subunit delta (Vibrio alginolyticus).